The following is an 87-amino-acid chain: Small ribosomal subunit protein uS19m (87 aa).

It belongs to the universal ribosomal protein uS19 family.

It is found in the mitochondrion. This is Small ribosomal subunit protein uS19m (mrps19) from Dictyostelium citrinum (Slime mold).